A 124-amino-acid chain; its full sequence is Quinol oxidase subunit 4 (124 aa).

3 helical membrane-spanning segments follow: residues 16–36 (IVGFALSIVLTLLALWVAVYT), 44–64 (LWIIFGFAFIQAALQLLMFMH), and 78–98 (TLFGFFGAIVIVLGSIWIFAA).

This sequence belongs to the cytochrome c oxidase bacterial subunit 4 family.

The protein resides in the cell membrane. The catalysed reaction is 2 a quinol + O2 = 2 a quinone + 2 H2O. Functionally, catalyzes quinol oxidation with the concomitant reduction of oxygen to water. Major component for energy conversion during vegetative growth. The protein is Quinol oxidase subunit 4 (qoxD) of Bacillus spizizenii (strain ATCC 23059 / NRRL B-14472 / W23) (Bacillus subtilis subsp. spizizenii).